Consider the following 85-residue polypeptide: MTNIGSLLVDAAALMVTGMGVVFIFLTILIFLVRLMSKLVPQEVPPPITAPKAVKNQANHTSTVSPQVVAAISAAIHQHRASVAK.

Residues 11–33 (AAALMVTGMGVVFIFLTILIFLV) form a helical membrane-spanning segment.

It belongs to the OadG family. In terms of assembly, heterotrimer of an alpha, a beta and a gamma subunit. The cofactor is Na(+).

It localises to the cell membrane. It carries out the reaction oxaloacetate + 2 Na(+)(in) + H(+) = pyruvate + 2 Na(+)(out) + CO2. Its function is as follows. Catalyzes the decarboxylation of oxaloacetate coupled to Na(+) translocation. The chain is Probable oxaloacetate decarboxylase gamma chain from Vibrio vulnificus (strain CMCP6).